The chain runs to 579 residues: Mycobactin import ATP-binding/permease protein IrtB (579 aa).

Over M1 to L25 the chain is Cytoplasmic. One can recognise an ABC transmembrane type-1 domain in the interval A21 to T299. A helical transmembrane segment spans residues L26–F46. Over S47–D48 the chain is Periplasmic. The helical transmembrane segment at T49–V69 threads the bilayer. The Cytoplasmic segment spans residues T70–G126. 2 consecutive transmembrane segments (helical) span residues L127 to V147 and A148 to F168. Topologically, residues G169–Q241 are cytoplasmic. The helical transmembrane segment at V242–L262 threads the bilayer. Over T263–E272 the chain is Periplasmic. Residues A273–L293 form a helical membrane-spanning segment. Residues A294–R579 are Cytoplasmic-facing. The 234-residue stretch at I332–Q565 folds into the ABC transporter domain. G364–T371 contacts ATP.

This sequence belongs to the ABC transporter superfamily. Siderophore-Fe(3+) uptake transporter (SIUT) (TC 3.A.1.21) family. Forms a heterodimer with IrtA.

Its subcellular location is the cell inner membrane. The ATPase activity of IrtAB is stimulated more than 38-fold in the presence of Fe-MBT, and more than 10-fold in the presence of Fe-cMBT. Functionally, part of the ABC transporter complex IrtAB involved in the import of iron-bound mycobactin (Fe-MBT) and carboxymycobactin (Fe-cMBT). Has a preference for Fe-MBT over Fe-cMBT. Transmembrane domains (TMD) form a pore in the membrane and the ATP-binding domain (NBD) is responsible for energy generation. The chain is Mycobactin import ATP-binding/permease protein IrtB from Mycolicibacterium thermoresistibile (strain ATCC 19527 / DSM 44167 / CIP 105390 / JCM 6362 / NCTC 10409 / 316) (Mycobacterium thermoresistibile).